A 149-amino-acid chain; its full sequence is Pleckstrin homology domain-containing family J member 1 (149 aa).

The PH domain maps to 15 to 108 (RAEKAAELGM…WVEALTNASY (94 aa)).

The sequence is that of Pleckstrin homology domain-containing family J member 1 (plekhj1) from Xenopus laevis (African clawed frog).